The sequence spans 1077 residues: MRTDERRRWWVKPKKHITLVFITITMIIQFQMKGCVSCVETERMGLLQLKSYLKNLVDAEEEEEEGLSILKSWTHHEGDCCRWERVKCSDAINGHVIGLSLDRLVPVAFESQTRSLNLSLLHSFPQLQSLNLSWNWFTNLSDHFLGFKSFGTLDKLTTLDFSHNMFDNSIVPFLNAATSIRSLHLESNYMEGVFPPQELSNMTNLRVLNLKDNSFSFLSSQGLTDFRDLEVLDLSFNGVNDSEASHSLSTAKLKTLDLNFNPLSDFSQLKGLESLQELQVLKLRGNKFNHTLSTHVLKDLKMLQELDLSDNGFTNLDHGRGLEIPTSLQVLDFKRNQLSLTHEGYLGICRLMKLRELDLSSNALTSLPYCLGNLTHLRTLDLSNNQLNGNLSSFVSGLPSVLEYLSLLDNNFDGSFLFNSLVNQTRLTVFKLSSKVGVIQVQTESSWAPLFQLKMLYLSNCSLGSTMLGFLVHQRDLCFVDLSHNKLTGTFPTWLVKNNTRLQTILLSGNSLTKLQLPILVHGLQVLDISSNMIYDSIQEDIGMVFPNLRFMNFSSNHFQGTIPSSIGEMKSLQVLDMSSNGLYGQLPIMFLSGCYSLRVLKLSNNQLQGKIFSKHANLTGLVGLFLDGNNFTGSLEEGLLKSKNLTLLDISDNRFSGMLPLWIGRISRLSYLYMSGNQLKGPFPFLRQSPWVEVMDISHNSFSGSIPRNVNFPSLRELRLQNNEFTGLVPGNLFKAAGLEVLDLRNNNFSGKILNTIDQTSKLRILLLRNNSFQTYIPGKICQLSEVGLLDLSHNQFRGPIPSCFSKMSFGAEQNDRTMSLVADFDFSYITFLPHCQYGSHLNLDDGVRNGYQPKPATVVDFLTKSRYEAYQGDILRYMHGLDLSSNELSGEIPIEIGDLQNIRSLNLSSNRLTGSIPDSISKLKGLESLDLSNNKLDGSIPPALADLNSLGYLNISYNNLSGEIPFKGHLVTFDERSYIGNAHLCGLPTNKNCISQRVPEPPSVSTHAKEEENEEEGNVIDMVWFYWTCAAVYISTSLALFAFLYIDSRWSREWFYRVDLCVHHILQFKRSSVCN.

Residues 1-38 (MRTDERRRWWVKPKKHITLVFITITMIIQFQMKGCVSC) form the signal peptide. The segment at 39–120 (VETERMGLLQ…SQTRSLNLSL (82 aa)) is N-cap. Topologically, residues 39-1024 (VETERMGLLQ…NEEEGNVIDM (986 aa)) are extracellular. 3 N-linked (GlcNAc...) asparagine glycosylation sites follow: Asn117, Asn131, and Asn139. 12 LRR repeats span residues 124-147 (FPQL…FLGF), 153-176 (LDKL…FLNA), 177-201 (ATSI…ELSN), 202-225 (MTNL…GLTD), 227-250 (RDLE…SLST), 251-274 (AKLK…GLES), 275-299 (LQEL…VLKD), 300-324 (LKML…GLEI), 326-348 (TSLQ…YLGI), 351-376 (LMKL…NLTH), 378-397 (RTLD…FVSG), and 399-424 (PSVL…LVNQ). The N-linked (GlcNAc...) asparagine glycan is linked to Asn201. Residue Asn240 is glycosylated (N-linked (GlcNAc...) asparagine). An N-linked (GlcNAc...) asparagine glycan is attached at Asn289. N-linked (GlcNAc...) asparagine glycans are attached at residues Asn373, Asn390, and Asn423. An LRR 13; degenerate repeat occupies 425–449 (TRLTVFKLSSKVGVIQVQTESSWAP). LRR repeat units follow at residues 450–473 (LFQL…FLVH), 474–498 (QRDL…LVKN), 499–522 (NTRL…ILVH), 524–545 (LQVL…IGMV), 546–570 (FPNL…IGEM), 572–594 (SLQV…FLSG), 595–621 (CYSL…NLTG), 623–643 (VGLF…LLKS), 644–666 (KNLT…WIGR), 667–694 (ISRL…PWVE), 696–713 (MDIS…NVNF), 714–737 (PSLR…LFKA), 739–761 (GLEV…IDQT), 762–785 (SKLR…ICQL), 786–808 (SEVG…CFSK), 877–901 (LRYM…IGDL), 902–925 (QNIR…ISKL), 927–949 (GLES…LADL), and 951–970 (SLGY…PFKG). Residues Asn460 and Asn498 are each glycosylated (N-linked (GlcNAc...) asparagine). Residue Asn553 is glycosylated (N-linked (GlcNAc...) asparagine). N-linked (GlcNAc...) asparagine glycosylation is found at Asn618, Asn631, and Asn645. N-linked (GlcNAc...) asparagine glycans are attached at residues Asn749 and Asn771. N-linked (GlcNAc...) asparagine glycosylation is present at Asn908. N-linked (GlcNAc...) asparagine glycans are attached at residues Asn956 and Asn961. The tract at residues 971–1024 (HLVTFDERSYIGNAHLCGLPTNKNCISQRVPEPPSVSTHAKEEENEEEGNVIDM) is C-cap/acidic domain. The helical transmembrane segment at 1025 to 1045 (VWFYWTCAAVYISTSLALFAF) threads the bilayer. At 1046–1077 (LYIDSRWSREWFYRVDLCVHHILQFKRSSVCN) the chain is on the cytoplasmic side.

This sequence belongs to the RLP family.

Its subcellular location is the cell membrane. Its function is as follows. Involved in plant defense. Confers resistance to the bacterial pathogen Xanthomonas through recognition of the microbe-associated molecular pattern (MAMP) eMax. Functionality seems to depend on the presence of the receptor kinase SOBIR1 as an adapter protein. This chain is Receptor-like protein 1, found in Arabidopsis thaliana (Mouse-ear cress).